Reading from the N-terminus, the 180-residue chain is uncharacterized protein (180 aa).

This is an uncharacterized protein from Haemophilus influenzae (strain ATCC 51907 / DSM 11121 / KW20 / Rd).